Here is a 258-residue protein sequence, read N- to C-terminus: Imidazole glycerol phosphate synthase subunit HisF (258 aa).

Catalysis depends on residues Asp-12 and Asp-131.

The protein belongs to the HisA/HisF family. As to quaternary structure, heterodimer of HisH and HisF.

It is found in the cytoplasm. The catalysed reaction is 5-[(5-phospho-1-deoxy-D-ribulos-1-ylimino)methylamino]-1-(5-phospho-beta-D-ribosyl)imidazole-4-carboxamide + L-glutamine = D-erythro-1-(imidazol-4-yl)glycerol 3-phosphate + 5-amino-1-(5-phospho-beta-D-ribosyl)imidazole-4-carboxamide + L-glutamate + H(+). It functions in the pathway amino-acid biosynthesis; L-histidine biosynthesis; L-histidine from 5-phospho-alpha-D-ribose 1-diphosphate: step 5/9. Its function is as follows. IGPS catalyzes the conversion of PRFAR and glutamine to IGP, AICAR and glutamate. The HisF subunit catalyzes the cyclization activity that produces IGP and AICAR from PRFAR using the ammonia provided by the HisH subunit. The polypeptide is Imidazole glycerol phosphate synthase subunit HisF (Arthrobacter sp. (strain FB24)).